The following is a 110-amino-acid chain: BET1-like protein (110 aa).

Residues M1 to K85 lie on the Cytoplasmic side of the membrane. A t-SNARE coiled-coil homology domain is found at D14–M76. Residues I86–S106 form a helical; Anchor for type IV membrane protein membrane-spanning segment. At R107–N110 the chain is on the lumenal side.

As to quaternary structure, component of a SNARE complex consisting of stx5, ykt6, gosr2 and bet1l.

The protein resides in the golgi apparatus membrane. Vesicle SNARE required for targeting and fusion of retrograde transport vesicles with the Golgi complex. Required for the integrity of the Golgi complex. The sequence is that of BET1-like protein (bet1l) from Danio rerio (Zebrafish).